Here is a 724-residue protein sequence, read N- to C-terminus: Disks large homolog 4 (724 aa).

2 S-palmitoyl cysteine lipidation sites follow: Cys-3 and Cys-5. Residues 15 to 35 (QDEDTPPLEHSPAHLPNQANS) are disordered. PDZ domains follow at residues 65-151 (EITL…VMRR) and 160-246 (EIKL…VAKP). Phosphoserine is present on residues Ser-73 and Ser-142. Residue Tyr-240 is modified to Phosphotyrosine. Ser-295 is modified (phosphoserine). The 81-residue stretch at 313 to 393 (RIVIHRGSTG…QTVTIIAQYK (81 aa)) folds into the PDZ 3 domain. Phosphoserine is present on residues Ser-415 and Ser-418. Thr-420 is modified (phosphothreonine). 4 positions are modified to phosphoserine: Ser-422, Ser-425, Ser-449, and Ser-480. The SH3 domain maps to 428-498 (KRGFYIRALF…PSKRRVERRE (71 aa)). The region spanning 534 to 709 (ARPIIILGPT…IYHKVKRVIE (176 aa)) is the Guanylate kinase-like domain. Position 580 is a phosphotyrosine (Tyr-580). Ser-606 and Ser-654 each carry phosphoserine. A Phosphotyrosine modification is found at Tyr-715.

It belongs to the MAGUK family. As to quaternary structure, interacts through its PDZ domains with ANO2 and NETO1. Interacts through its first two PDZ domains with GRIN2A, GRIN2B, GRIN2C, GRIN2D. Interacts with ASIC3. Interacts with SEMA4C. Interacts with CXADR. Interacts with KCND2. Interacts with SYNGAP1. Interacts with LRRC4 and LRRC4B. Interacts with ERBB4. Interacts with KCNA1, KCNA2, KCNA3 and KCNA4. Interacts through its first PDZ domain with GRIK2, KCNA4 and CRIPT. Interacts through its second PDZ domain with the PDZ domain of NOS1 or the C-terminus of CAPON. Interacts through its third PDZ domain with NLGN1 and CRIPT, and probably with NLGN2 and NLGN3. Interacts through its guanylate kinase-like domain with KIF13B. Interacts through its guanylate kinase-like domain with DLGAP1/GKAP, DLGAP2, DLGAP3, DLGAP4, MAP1A, BEGAIN and SIPA1L1. Isoform 2 interacts through an L27 domain with HGS/HRS and the first L27 domain of CASK. Interacts with ADR1B and ANKS1B. May interact with HTR2A. Interacts with ADAM22. Interacts with KLHL17 and LGI1. Interacts with FRMPD4 (via C-terminus). Interacts with LRFN1, LRFN2 and LRFN4. Interacts (via N-terminal tandem pair of PDZ domains) with GPER1 (via C-terminus tail motif); the interaction is direct and induces the increase of GPER1 protein levels residing at the plasma membrane surface in a estradiol-independent manner. Interacts (via N-terminus tandem pair of PDZ domains) with NOS1 (via N-terminal domain). Interacts with SHANK3. Interacts with KCNJ4. Interacts with GPR85. Interacts with CACNG2 and MPP2 (via the SH3-Guanylate kinase-like sub-module). Interacts with ADGRB1. Found in a complex with PRR7 and GRIN1. Interacts (via PDZ3 domain and to lesser degree via PDZ2 domain) with PRR7. Component of the postsynaptic hippocampal AMPA-type glutamate receptor (AMPAR) complex, at least composed of pore forming AMPAR subunits GRIA1, GRIA2 and GRIA3 and AMPAR auxiliary proteins SHISA6 and SHISA7. Interacts (via its first two PDZ domains) with SHISA6 and SHISA7 (via PDZ-binding motif); the interaction is direct. Interacts with RPH3A and GRIN2A; this ternary complex regulates NMDA receptor composition at postsynaptic membranes. Interacts with ABR and BCR. Interacts with DGKI (via PDZ-binding motif); controls the localization of DGKI to the synapse. Interacts with C9orf72, SMCR8 and RAB39B. Interacts with ZDHHC5. Interacts with PTEN (via PDZ domain-binding motif); the interaction is induced by NMDA and is required for PTEN location at postsynaptic density. Found in a complex with GRIA1, GRIA2, GRIA3, GRIA4, CACNG8 and CNIH2. Interacts with FAM81A; the interaction facilitates condensate formation via liquid-liquid phase separation. Interacts with ADGRL3. Interacts with SORCS3. In terms of processing, palmitoylated. Palmitoylation is required for targeting to postsynaptic density, plasma membrane and synapses. Palmitoylation by ZDHHC2 occurs when the synaptic activity decreases and induces DLG4 synaptic clustering. Palmitoylation by ZDHHC15 regulates trafficking to the postsynaptic density and function in synaptogenesis. Palmitoylation may play a role in glutamate receptor GRIA1 synapse clustering. Depalmitoylated by ABHD17A and ABHD17B and to a lesser extent by ABHD17C, ABHD12, ABHD13, LYPLA1 and LYPLA2. Undergoes rapid synaptic palmitoylation/depalmitoylation cycles during neuronal development which slow down in mature neurons. Post-translationally, ubiquitinated by MDM2 in response to NMDA receptor activation, leading to proteasome-mediated degradation of DLG4 which is required for AMPA receptor endocytosis. Brain.

Its subcellular location is the cell membrane. The protein localises to the postsynaptic density. It is found in the synapse. The protein resides in the cytoplasm. It localises to the cell projection. Its subcellular location is the axon. The protein localises to the dendritic spine. It is found in the dendrite. The protein resides in the presynapse. In terms of biological role, postsynaptic scaffolding protein that plays a critical role in synaptogenesis and synaptic plasticity by providing a platform for the postsynaptic clustering of crucial synaptic proteins. Interacts with the cytoplasmic tail of NMDA receptor subunits and shaker-type potassium channels. Required for synaptic plasticity associated with NMDA receptor signaling. Overexpression or depletion of DLG4 changes the ratio of excitatory to inhibitory synapses in hippocampal neurons. May reduce the amplitude of ASIC3 acid-evoked currents by retaining the channel intracellularly. May regulate the intracellular trafficking of ADR1B. Also regulates AMPA-type glutamate receptor (AMPAR) immobilization at postsynaptic density keeping the channels in an activated state in the presence of glutamate and preventing synaptic depression. Under basal conditions, cooperates with FYN to stabilize palmitoyltransferase ZDHHC5 at the synaptic membrane through FYN-mediated phosphorylation of ZDHHC5 and its subsequent inhibition of association with endocytic proteins. The protein is Disks large homolog 4 of Homo sapiens (Human).